Consider the following 332-residue polypeptide: DNA-directed RNA polymerase subunit alpha (332 aa).

An alpha N-terminal domain (alpha-NTD) region spans residues 1-234 (MTVTISQVLR…DQLSVFGDFT (234 aa)). The alpha C-terminal domain (alpha-CTD) stretch occupies residues 248–332 (VDPVLLRPID…PGVSQYGMLG (85 aa)).

This sequence belongs to the RNA polymerase alpha chain family. In terms of assembly, homodimer. The RNAP catalytic core consists of 2 alpha, 1 beta, 1 beta' and 1 omega subunit. When a sigma factor is associated with the core the holoenzyme is formed, which can initiate transcription.

It catalyses the reaction RNA(n) + a ribonucleoside 5'-triphosphate = RNA(n+1) + diphosphate. DNA-dependent RNA polymerase catalyzes the transcription of DNA into RNA using the four ribonucleoside triphosphates as substrates. In Xylella fastidiosa (strain M12), this protein is DNA-directed RNA polymerase subunit alpha.